The sequence spans 428 residues: Serine--tRNA ligase (428 aa).

Residue 235–237 (TAE) participates in L-serine binding. Residue 266 to 268 (RSE) participates in ATP binding. E289 serves as a coordination point for L-serine. 353-356 (EISS) lines the ATP pocket. Residue S389 coordinates L-serine.

It belongs to the class-II aminoacyl-tRNA synthetase family. Type-1 seryl-tRNA synthetase subfamily. As to quaternary structure, homodimer. The tRNA molecule binds across the dimer.

The protein resides in the cytoplasm. It carries out the reaction tRNA(Ser) + L-serine + ATP = L-seryl-tRNA(Ser) + AMP + diphosphate + H(+). It catalyses the reaction tRNA(Sec) + L-serine + ATP = L-seryl-tRNA(Sec) + AMP + diphosphate + H(+). It participates in aminoacyl-tRNA biosynthesis; selenocysteinyl-tRNA(Sec) biosynthesis; L-seryl-tRNA(Sec) from L-serine and tRNA(Sec): step 1/1. Functionally, catalyzes the attachment of serine to tRNA(Ser). Is also able to aminoacylate tRNA(Sec) with serine, to form the misacylated tRNA L-seryl-tRNA(Sec), which will be further converted into selenocysteinyl-tRNA(Sec). The sequence is that of Serine--tRNA ligase from Shewanella frigidimarina (strain NCIMB 400).